We begin with the raw amino-acid sequence, 379 residues long: Cytochrome b (379 aa).

4 consecutive transmembrane segments (helical) span residues 33–53 (FGSLLGICLILQIITGLFLAM), 77–98 (WMIRYMHANGASMFFICLFIHI), 113–133 (WNIGVILLFTTMATAFMGYVL), and 178–198 (FFAFHFILPFIIMALAAVHLL). His-83 and His-97 together coordinate heme b. Residues His-182 and His-196 each contribute to the heme b site. His-201 is a binding site for a ubiquinone. 4 helical membrane-spanning segments follow: residues 226–246 (MKDIMGFLTMFLALLTLVLFY), 288–308 (LGGVVALMLSILILIFLPMMH), 320–340 (LSQCMFWILVANLLTLTWIGG), and 347–367 (FIMIGQLASLSYFLIILIIMP).

The protein belongs to the cytochrome b family. In terms of assembly, the cytochrome bc1 complex contains 11 subunits: 3 respiratory subunits (MT-CYB, CYC1 and UQCRFS1), 2 core proteins (UQCRC1 and UQCRC2) and 6 low-molecular weight proteins (UQCRH/QCR6, UQCRB/QCR7, UQCRQ/QCR8, UQCR10/QCR9, UQCR11/QCR10 and a cleavage product of UQCRFS1). This cytochrome bc1 complex then forms a dimer. It depends on heme b as a cofactor.

The protein resides in the mitochondrion inner membrane. Component of the ubiquinol-cytochrome c reductase complex (complex III or cytochrome b-c1 complex) that is part of the mitochondrial respiratory chain. The b-c1 complex mediates electron transfer from ubiquinol to cytochrome c. Contributes to the generation of a proton gradient across the mitochondrial membrane that is then used for ATP synthesis. The sequence is that of Cytochrome b (MT-CYB) from Massoutiera mzabi (Mzab gundi).